Consider the following 593-residue polypeptide: Multidrug resistance-like ATP-binding protein MdlB (593 aa).

Residues 1 to 25 (MRSFSQLWPTLKRLLAYGSPWRKPL) are Cytoplasmic-facing. In terms of domain architecture, ABC transmembrane type-1 spans 25–310 (LGIAVLMMWV…LTTQQAMLQQ (286 aa)). Residues 26–46 (GIAVLMMWVAAAAEVSGPLLI) traverse the membrane as a helical segment. At 47–62 (SYFIDNMVAKNNLPLK) the chain is on the periplasmic side. Residues 63–83 (VVAGLAAAYVGLQLFAAGLHY) traverse the membrane as a helical segment. Over 84 to 140 (AQSLLFNRAAVGVVQQLRTDVMDAALRQPLSEFDTQPVGQVISRVTNDTEVIRDLYV) the chain is Cytoplasmic. Residues 141-161 (TVVATVLRSAALVGAMLVAMF) form a helical membrane-spanning segment. Topologically, residues 162-164 (SLD) are periplasmic. A helical membrane pass occupies residues 165 to 185 (WRMALVAIMIFPVVLVVMVIY). Residues 186–254 (QRYSTPIVRR…LRLDGFLLRP (69 aa)) lie on the Cytoplasmic side of the membrane. The chain crosses the membrane as a helical span at residues 255–275 (LLSLFSSLILCGLLMLFGFSA). Residues 276–278 (SGT) are Periplasmic-facing. The helical transmembrane segment at 279–299 (IEVGVLYAFISYLGRLNEPLI) threads the bilayer. Residues 300 to 593 (ELTTQQAMLQ…SVREEESLSA (294 aa)) are Cytoplasmic-facing. In terms of domain architecture, ABC transporter spans 341–574 (IEVDNVSFAY…QGRYWQMYQL (234 aa)). Residue 374 to 381 (GHTGSGKS) participates in ATP binding.

Belongs to the ABC transporter superfamily. Drug exporter-2 (TC 3.A.1.117) family.

The protein localises to the cell inner membrane. The enzyme catalyses ATP + H2O + xenobioticSide 1 = ADP + phosphate + xenobioticSide 2.. The protein is Multidrug resistance-like ATP-binding protein MdlB (mdlB) of Escherichia coli O6:H1 (strain CFT073 / ATCC 700928 / UPEC).